The sequence spans 547 residues: GMP synthase [glutamine-hydrolyzing] (547 aa).

The Glutamine amidotransferase type-1 domain maps to 12-210; that stretch reads KILILDFGSQ…VLDIAGAKPD (199 aa). Catalysis depends on C89, which acts as the Nucleophile. Active-site residues include H184 and E186. The region spanning 211–403 is the GMPS ATP-PPase domain; sequence WIMRDHIEEA…LGLPAEMVYR (193 aa). Residue 238 to 244 participates in ATP binding; it reads SGGVDSS.

In terms of assembly, homodimer.

The enzyme catalyses XMP + L-glutamine + ATP + H2O = GMP + L-glutamate + AMP + diphosphate + 2 H(+). It participates in purine metabolism; GMP biosynthesis; GMP from XMP (L-Gln route): step 1/1. Catalyzes the synthesis of GMP from XMP. The sequence is that of GMP synthase [glutamine-hydrolyzing] from Burkholderia pseudomallei (strain 1710b).